A 342-amino-acid chain; its full sequence is Nucleoid-associated protein Sfri_2491 (342 aa).

Belongs to the YejK family.

The protein resides in the cytoplasm. It localises to the nucleoid. The chain is Nucleoid-associated protein Sfri_2491 from Shewanella frigidimarina (strain NCIMB 400).